A 118-amino-acid polypeptide reads, in one-letter code: MARIAGVNIPDNKHTVISLTYIYGVGRTTAQAICAATGVNPAAKIKDLSDEQIEQLRGEVAKLTTEGDLRREVNMKIKRLMDLGCYRGLRHRRGLPVRGQRTKTNARTRKGPRKPIRK.

Residues 93–118 form a disordered region; the sequence is RGLPVRGQRTKTNARTRKGPRKPIRK.

This sequence belongs to the universal ribosomal protein uS13 family. In terms of assembly, part of the 30S ribosomal subunit. Forms a loose heterodimer with protein S19. Forms two bridges to the 50S subunit in the 70S ribosome.

In terms of biological role, located at the top of the head of the 30S subunit, it contacts several helices of the 16S rRNA. In the 70S ribosome it contacts the 23S rRNA (bridge B1a) and protein L5 of the 50S subunit (bridge B1b), connecting the 2 subunits; these bridges are implicated in subunit movement. Contacts the tRNAs in the A and P-sites. This Azotobacter vinelandii (strain DJ / ATCC BAA-1303) protein is Small ribosomal subunit protein uS13.